A 597-amino-acid polypeptide reads, in one-letter code: MKNIRNFSIIAHIDHGKSTLADRMIQECGVITARDFQDQLLDNMDIERERGITIKSQTVCLPYTAKDGKEYILNLVDTPGHVDFSYEVSRALTSCEGALLIVDAAQGVEAQTLANLYLAMENDLEIIPVINKIDLPSAEPEKVALQIEEDLGLDADLIQLCSAKTGVGVHEILDSIVEHLPAPEGDAKAPLQALIFDANYDPFRGTIISVRLINGTVKAGDIIRFMSTGIEYKVEEVGLFKVQREARKTLSAGEVGYILAGIKTVQDTRPGETITLKANPCEAALAGFQEVQQVVFSSIYPIDTDDYEDLVVALEKLKLNDAALTFEKDSSVALGFGFRCGFLGLLHLEVVQERLEREFNISLILTVPSVKYIFTLSDGTTKEVDNPAHFPDPTHIDEVKEPFIKASILIPEKYMGAVMNLCMERRGENTTFHYPTPGRIEFICELPLAEVIYDFYDRLKSVTQGYGSFDYELIDYRKSDLVKLDILVNSEPVDALSQLVHRVNARKRGLHSCEMLKEEIPRQMFKIAIQAAIGGNVVARTNISAMRKDVTAKCYGGDISRKRKLLEKQKAGKKRMKTVGNVDIPQTAFLAVLKSEQ.

Residues 2–184 (KNIRNFSIIA…SIVEHLPAPE (183 aa)) enclose the tr-type G domain. Residues 14-19 (DHGKST) and 131-134 (NKID) contribute to the GTP site.

It belongs to the TRAFAC class translation factor GTPase superfamily. Classic translation factor GTPase family. LepA subfamily.

The protein localises to the cell inner membrane. The enzyme catalyses GTP + H2O = GDP + phosphate + H(+). Functionally, required for accurate and efficient protein synthesis under certain stress conditions. May act as a fidelity factor of the translation reaction, by catalyzing a one-codon backward translocation of tRNAs on improperly translocated ribosomes. Back-translocation proceeds from a post-translocation (POST) complex to a pre-translocation (PRE) complex, thus giving elongation factor G a second chance to translocate the tRNAs correctly. Binds to ribosomes in a GTP-dependent manner. This chain is Elongation factor 4, found in Desulfotalea psychrophila (strain LSv54 / DSM 12343).